The primary structure comprises 20 residues: Kassinatuerin-2 (20 aa).

Residue I20 is modified to Isoleucine amide.

Expressed by the skin dorsal glands.

It localises to the secreted. Functionally, has no antimicrobial activities against bacteria (E.coli and S.aureus) nor against the fungus C.albicans. This is Kassinatuerin-2 from Kassina senegalensis (Senegal running frog).